The sequence spans 737 residues: Transcriptional repressor CTCF (737 aa).

An N-acetylmethionine modification is found at M1. K18 is covalently cross-linked (Glycyl lysine isopeptide (Lys-Gly) (interchain with G-Cter in SUMO2)). A Glycyl lysine isopeptide (Lys-Gly) (interchain with G-Cter in SUMO) cross-link involves residue K74. The interval 180-211 (QGELPPQEDPSWQKDPDYQPPAKKTKKTKKSK) is disordered. The span at 202–211 (KKTKKTKKSK) shows a compositional bias: basic residues. K219 participates in a covalent cross-link: Glycyl lysine isopeptide (Lys-Gly) (interchain with G-Cter in SUMO2). Residues 266–288 (FQCELCSYTCPRRSNLDRHMKSH) form a C2H2-type 1 zinc finger. T289 bears the Phosphothreonine mark. Residues 294–316 (HKCHLCGRAFRTVTLLRNHLNTH) form a C2H2-type 2 zinc finger. Residue T317 is modified to Phosphothreonine. C2H2-type zinc fingers lie at residues 322 to 345 (HKCPDCDMAFVTSGELVRHRRYKH) and 351 to 373 (FKCSMCDYASVEVSKLKRHIRSH). The residue at position 374 (T374) is a Phosphothreonine. The segment at 379–401 (FQCSLCSYASRDTYKLKRHMRTH) adopts a C2H2-type 5 zinc-finger fold. S402 is modified (phosphoserine). 5 C2H2-type zinc fingers span residues 407-430 (YECYICHARFTQSGTMKMHILQKH), 437-460 (FHCPHCDTVIARKSDLGVHLRKQH), 467-489 (KKCRYCDAVFHERYALIQHQKSH), 495-517 (FKCDQCDYACRQERHMIMHKRTH), and 523-546 (YACSHCDKTFRQKQLLDMHFKRYH). The C2H2-type 11; atypical zinc-finger motif lies at 555-577 (FVCSKCGKTFTRRNTMARHADNC). Disordered stretches follow at residues 573 to 687 (HADN…EDQN) and 699 to 727 (KKEPDAEPAEGEEEEAQAAPADAPNGDLT). Basic residues predominate over residues 593 to 604 (KSKRGRKRKMRS). Phosphoserine occurs at positions 609, 610, and 612. Residues 610–636 (SDSENAEPDLDDNEEEEEPAVEIEPEP) are compositionally biased toward acidic residues. The span at 637 to 657 (EPQPQPQPQPQPQPVAPAPPP) shows a compositional bias: pro residues. Residues 668–687 (RTNQPKQNQPTAIIQVEDQN) are compositionally biased toward polar residues. A Glycyl lysine isopeptide (Lys-Gly) (interchain with G-Cter in SUMO); alternate cross-link involves residue K699. K699 participates in a covalent cross-link: Glycyl lysine isopeptide (Lys-Gly) (interchain with G-Cter in SUMO2); alternate. The span at 704–714 (AEPAEGEEEEA) shows a compositional bias: acidic residues.

This sequence belongs to the CTCF zinc-finger protein family. Interacts with CHD8. Interacts with LLPH. Interacts with CENPE. Interacts with BRD2; promoting BRD2 recruitment to chromatin. Post-translationally, sumoylated on Lys-74 and Lys-699; sumoylation of CTCF contributes to the repressive function of CTCF on the MYC P2 promoter.

It is found in the nucleus. Its subcellular location is the nucleoplasm. The protein resides in the chromosome. The protein localises to the centromere. Chromatin binding factor that binds to DNA sequence specific sites and regulates the 3D structure of chromatin. Binds together strands of DNA, thus forming chromatin loops, and anchors DNA to cellular structures, such as the nuclear lamina. Defines the boundaries between active and heterochromatic DNA via binding to chromatin insulators, thereby preventing interaction between promoter and nearby enhancers and silencers. Plays a critical role in the epigenetic regulation. Participates in the allele-specific gene expression at the imprinted IGF2/H19 gene locus. On the maternal allele, binding within the H19 imprinting control region (ICR) mediates maternally inherited higher-order chromatin conformation to restrict enhancer access to IGF2. Mediates interchromosomal association between IGF2/H19 and WSB1/NF1 and may direct distant DNA segments to a common transcription factory. Regulates asynchronous replication of IGF2/H19. Plays a critical role in gene silencing over considerable distances in the genome. Preferentially interacts with unmethylated DNA, preventing spreading of CpG methylation and maintaining methylation-free zones. Inversely, binding to target sites is prevented by CpG methylation. Plays an important role in chromatin remodeling. Can dimerize when it is bound to different DNA sequences, mediating long-range chromatin looping. Causes local loss of histone acetylation and gain of histone methylation in the beta-globin locus, without affecting transcription. When bound to chromatin, it provides an anchor point for nucleosomes positioning. Seems to be essential for homologous X-chromosome pairing. May participate with Tsix in establishing a regulatable epigenetic switch for X chromosome inactivation. May play a role in preventing the propagation of stable methylation at the escape genes from X-inactivation. Involved in sister chromatid cohesion. Associates with both centromeres and chromosomal arms during metaphase and required for cohesin localization to CTCF sites. Plays a role in the recruitment of CENPE to the pericentromeric/centromeric regions of the chromosome during mitosis. Acts as a transcriptional repressor binding to promoters of vertebrate MYC gene and BAG1 gene. Also binds to the PLK and PIM1 promoters. Acts as a transcriptional activator of APP. Regulates APOA1/C3/A4/A5 gene cluster and controls MHC class II gene expression. Plays an essential role in oocyte and preimplantation embryo development by activating or repressing transcription. Seems to act as tumor suppressor. In Rattus norvegicus (Rat), this protein is Transcriptional repressor CTCF (Ctcf).